A 723-amino-acid chain; its full sequence is LPS-assembly protein LptD (723 aa).

The N-terminal stretch at 1–23 (MNTLKLCLILYACLVLLPVRVMS) is a signal peptide.

It belongs to the LptD family. Component of the lipopolysaccharide transport and assembly complex. Interacts with LptE and LptA.

Its subcellular location is the cell outer membrane. Functionally, together with LptE, is involved in the assembly of lipopolysaccharide (LPS) at the surface of the outer membrane. This Nitrosomonas europaea (strain ATCC 19718 / CIP 103999 / KCTC 2705 / NBRC 14298) protein is LPS-assembly protein LptD.